An 89-amino-acid chain; its full sequence is Large ribosomal subunit protein bL27 (89 aa).

Positions 1-24 (MAHKKGTGSTRNGRDSNSKRLGVK) are disordered.

This sequence belongs to the bacterial ribosomal protein bL27 family.

The polypeptide is Large ribosomal subunit protein bL27 (Synechococcus sp. (strain WH7803)).